The following is a 527-amino-acid chain: Amine oxidase [flavin-containing] A (527 aa).

Residue Met1 is modified to N-acetylmethionine. Topologically, residues Met1 to Ser497 are cytoplasmic. Residue Ser383 is modified to Phosphoserine. Position 406 is an S-8alpha-FAD cysteine (Cys406). The chain crosses the membrane as a helical; Anchor for type IV membrane protein span at residues Val498 to Met518. Residues Tyr519–Ser527 are Mitochondrial intermembrane-facing. The tract at residues Arg520–Arg522 is interaction with membrane phospholipid headgroups.

Belongs to the flavin monoamine oxidase family. In terms of assembly, monomer, homo- or heterodimer (containing two subunits of similar size). Each subunit contains a covalently bound flavin. Enzymatically active as monomer. Requires FAD as cofactor.

It is found in the mitochondrion outer membrane. The enzyme catalyses a secondary aliphatic amine + O2 + H2O = a primary amine + an aldehyde + H2O2. It carries out the reaction a primary methyl amine + O2 + H2O = an aldehyde + H2O2 + NH4(+). It catalyses the reaction (R)-adrenaline + O2 + H2O = (R)-3,4-dihydroxymandelaldehyde + methylamine + H2O2. The catalysed reaction is dopamine + O2 + H2O = 3,4-dihydroxyphenylacetaldehyde + H2O2 + NH4(+). The enzyme catalyses tyramine + O2 + H2O = (4-hydroxyphenyl)acetaldehyde + H2O2 + NH4(+). It carries out the reaction (R)-noradrenaline + O2 + H2O = (R)-3,4-dihydroxymandelaldehyde + H2O2 + NH4(+). It catalyses the reaction serotonin + O2 + H2O = (5-hydroxyindol-3-yl)acetaldehyde + H2O2 + NH4(+). The catalysed reaction is kynuramine + O2 + H2O = 3-(2-aminophenyl)-3-oxopropanal + H2O2 + NH4(+). The enzyme catalyses tryptamine + O2 + H2O = indole-3-acetaldehyde + H2O2 + NH4(+). It carries out the reaction 2-phenylethylamine + O2 + H2O = 2-phenylacetaldehyde + H2O2 + NH4(+). In terms of biological role, catalyzes the oxidative deamination of primary and some secondary amine such as neurotransmitters, with concomitant reduction of oxygen to hydrogen peroxide and has important functions in the metabolism of neuroactive and vasoactive amines in the central nervous system and peripheral tissues. Preferentially oxidizes serotonin. Also catalyzes the oxidative deamination of kynuramine to 3-(2-aminophenyl)-3-oxopropanal that can spontaneously condense to 4-hydroxyquinoline. This chain is Amine oxidase [flavin-containing] A, found in Bos taurus (Bovine).